Consider the following 236-residue polypeptide: Ubiquitin carboxyl-terminal hydrolase YUH1 (236 aa).

Residues 7 to 233 (AVVPIESNPE…LNFAMLGLGP (227 aa)) enclose the UCH catalytic domain. Residues 10–15 (PIESNP) form an interaction with ubiquitin region. Cysteine 90 (nucleophile) is an active-site residue. The interval 149 to 157 (FSTGQSEAP) is interaction with ubiquitin. Histidine 166 (proton donor) is an active-site residue. The tract at residues 219–228 (NEEDVLNFAM) is interaction with ubiquitin.

This sequence belongs to the peptidase C12 family.

It carries out the reaction Thiol-dependent hydrolysis of ester, thioester, amide, peptide and isopeptide bonds formed by the C-terminal Gly of ubiquitin (a 76-residue protein attached to proteins as an intracellular targeting signal).. Its function is as follows. Deubiquitinating enzyme (DUB) that controls levels of cellular ubiquitin through processing of ubiquitin precursors and ubiquitinated proteins. Thiol protease that recognizes and hydrolyzes a peptide bond at the C-terminal glycine of either ubiquitin or RUB1. Preferentially cleaves ubiquitin from peptides and small adducts. The protein is Ubiquitin carboxyl-terminal hydrolase YUH1 (YUH1) of Saccharomyces cerevisiae (strain ATCC 204508 / S288c) (Baker's yeast).